A 475-amino-acid polypeptide reads, in one-letter code: Putative poly(A) polymerase catalytic subunit (475 aa).

This sequence belongs to the poxviridae poly(A) polymerase catalytic subunit family. Highly divergent.

It is found in the virion. The enzyme catalyses RNA(n) + ATP = RNA(n)-3'-adenine ribonucleotide + diphosphate. Polymerase that creates the 3'-poly(A) tail of mRNA's. This is Putative poly(A) polymerase catalytic subunit from Ornithodoros (relapsing fever ticks).